A 278-amino-acid chain; its full sequence is Ankyrin repeat and SOCS box protein 13 (278 aa).

ANK repeat units follow at residues 18–47 (VERT…CVNQ), 51–80 (DSIT…QVDA), 84–113 (DGST…KVNP), 116–145 (YTAS…NLEA), 149–178 (HFGT…NVNA), and 181–210 (LHET…NIYA). Residues 229 to 278 (AKCFEYYEKTPLTLSQLCRVNLRKATGVRGLEKIAKLNIPPRLIDYLSYN) form the SOCS box domain.

This sequence belongs to the ankyrin SOCS box (ASB) family.

Its pathway is protein modification; protein ubiquitination. May be a substrate-recognition component of a SCF-like ECS (Elongin-Cullin-SOCS-box protein) E3 ubiquitin-protein ligase complex which mediates the ubiquitination and subsequent proteasomal degradation of target proteins. The protein is Ankyrin repeat and SOCS box protein 13 (ASB13) of Homo sapiens (Human).